We begin with the raw amino-acid sequence, 353 residues long: UPF0283 membrane protein YcjF (353 aa).

Residues 1-19 (MSEPLKPRIDFAEPLKEEP) are compositionally biased toward basic and acidic residues. Residues 1-35 (MSEPLKPRIDFAEPLKEEPTSAFKAQQTFSEAESR) are disordered. 3 helical membrane-spanning segments follow: residues 70-90 (MVMG…VQWT), 100-120 (VALG…GSVV), and 213-233 (ESTL…FIAW).

This sequence belongs to the UPF0283 family.

Its subcellular location is the cell inner membrane. This chain is UPF0283 membrane protein YcjF, found in Salmonella enteritidis PT4 (strain P125109).